Consider the following 37-residue polypeptide: Large ribosomal subunit protein bL36c (37 aa).

It belongs to the bacterial ribosomal protein bL36 family.

It localises to the plastid. The protein resides in the chloroplast. This is Large ribosomal subunit protein bL36c from Bigelowiella natans (Pedinomonas minutissima).